The sequence spans 364 residues: Probable dual-specificity RNA methyltransferase RlmN (364 aa).

The active-site Proton acceptor is E107. The 234-residue stretch at 113 to 346 folds into the Radical SAM core domain; sequence HEYGNSVCVT…ATIRREQGSD (234 aa). Cysteines 120 and 351 form a disulfide. Residues C127, C131, and C134 each coordinate [4Fe-4S] cluster. Residues 177–178, S209, 232–234, and N308 contribute to the S-adenosyl-L-methionine site; these read GE and SLH. C351 functions as the S-methylcysteine intermediate in the catalytic mechanism.

This sequence belongs to the radical SAM superfamily. RlmN family. The cofactor is [4Fe-4S] cluster.

The protein localises to the cytoplasm. It carries out the reaction adenosine(2503) in 23S rRNA + 2 reduced [2Fe-2S]-[ferredoxin] + 2 S-adenosyl-L-methionine = 2-methyladenosine(2503) in 23S rRNA + 5'-deoxyadenosine + L-methionine + 2 oxidized [2Fe-2S]-[ferredoxin] + S-adenosyl-L-homocysteine. It catalyses the reaction adenosine(37) in tRNA + 2 reduced [2Fe-2S]-[ferredoxin] + 2 S-adenosyl-L-methionine = 2-methyladenosine(37) in tRNA + 5'-deoxyadenosine + L-methionine + 2 oxidized [2Fe-2S]-[ferredoxin] + S-adenosyl-L-homocysteine. Its function is as follows. Specifically methylates position 2 of adenine 2503 in 23S rRNA and position 2 of adenine 37 in tRNAs. Confers resistance to some classes of antibiotics. This is Probable dual-specificity RNA methyltransferase RlmN from Staphylococcus carnosus (strain TM300).